A 110-amino-acid polypeptide reads, in one-letter code: UPF0122 protein RBAM_015800 (110 aa).

The protein belongs to the UPF0122 family.

Might take part in the signal recognition particle (SRP) pathway. This is inferred from the conservation of its genetic proximity to ftsY/ffh. May be a regulatory protein. This is UPF0122 protein RBAM_015800 from Bacillus velezensis (strain DSM 23117 / BGSC 10A6 / LMG 26770 / FZB42) (Bacillus amyloliquefaciens subsp. plantarum).